Consider the following 243-residue polypeptide: MQLAYFHVAADVPQGAEPDAAVVIDVLRATTTIAWALNNGAEAVETFADLDQLRQSAAQWPESSRLMLGERGGQRIEGFDLGNSPVAVVPEQVAGKRLFMSTTNGTRSLQRVRGVQRLFTLALPNRKAVADHLLMDPPEQLWIVGSGWEGAYSLEDSLAAGALADLLLDAAADEACVANDELTAALALWQQWKHDPEACLRQASHGQRLIGLGDHDADFRCCAELDRLSVVPVQVKPGVLCAS.

Belongs to the ComB family. Mg(2+) serves as cofactor.

The enzyme catalyses (2R)-O-phospho-3-sulfolactate + H2O = (2R)-3-sulfolactate + phosphate. The protein is Probable 2-phosphosulfolactate phosphatase of Prochlorococcus marinus (strain MIT 9313).